Consider the following 324-residue polypeptide: tRNA U34 carboxymethyltransferase (324 aa).

Carboxy-S-adenosyl-L-methionine-binding positions include Lys-92, Trp-106, Lys-111, Gly-131, Asp-153 to Ser-155, Met-197, Tyr-201, and Arg-316.

Belongs to the class I-like SAM-binding methyltransferase superfamily. CmoB family. Homotetramer.

The enzyme catalyses carboxy-S-adenosyl-L-methionine + 5-hydroxyuridine(34) in tRNA = 5-carboxymethoxyuridine(34) in tRNA + S-adenosyl-L-homocysteine + H(+). Its function is as follows. Catalyzes carboxymethyl transfer from carboxy-S-adenosyl-L-methionine (Cx-SAM) to 5-hydroxyuridine (ho5U) to form 5-carboxymethoxyuridine (cmo5U) at position 34 in tRNAs. This is tRNA U34 carboxymethyltransferase from Hahella chejuensis (strain KCTC 2396).